Consider the following 355-residue polypeptide: Peptide chain release factor 1 (355 aa).

The residue at position 231 (Q231) is an N5-methylglutamine.

It belongs to the prokaryotic/mitochondrial release factor family. In terms of processing, methylated by PrmC. Methylation increases the termination efficiency of RF1.

Its subcellular location is the cytoplasm. Functionally, peptide chain release factor 1 directs the termination of translation in response to the peptide chain termination codons UAG and UAA. This is Peptide chain release factor 1 from Erythrobacter litoralis (strain HTCC2594).